A 290-amino-acid polypeptide reads, in one-letter code: Small ribosomal subunit biogenesis GTPase RsgA (290 aa).

The CP-type G domain occupies 63–220 (KNELIRPPIA…IADTPGFSNL (158 aa)). GTP-binding positions include 112 to 115 (NKFD) and 162 to 170 (GPSGVGKST). Zn(2+) contacts are provided by cysteine 244, cysteine 249, histidine 251, and cysteine 257.

This sequence belongs to the TRAFAC class YlqF/YawG GTPase family. RsgA subfamily. In terms of assembly, monomer. Associates with 30S ribosomal subunit, binds 16S rRNA. Zn(2+) is required as a cofactor.

The protein localises to the cytoplasm. Its function is as follows. One of several proteins that assist in the late maturation steps of the functional core of the 30S ribosomal subunit. Helps release RbfA from mature subunits. May play a role in the assembly of ribosomal proteins into the subunit. Circularly permuted GTPase that catalyzes slow GTP hydrolysis, GTPase activity is stimulated by the 30S ribosomal subunit. The polypeptide is Small ribosomal subunit biogenesis GTPase RsgA (Carboxydothermus hydrogenoformans (strain ATCC BAA-161 / DSM 6008 / Z-2901)).